The primary structure comprises 376 residues: Flap endonuclease 1 (376 aa).

The tract at residues 1-105 (MGIKGLSKLL…GELNKRKENA (105 aa)) is N-domain. Aspartate 34 contributes to the Mg(2+) binding site. Arginine 47 and arginine 71 together coordinate DNA. Mg(2+)-binding residues include aspartate 87, glutamate 159, glutamate 161, aspartate 180, and aspartate 182. The interval 123 to 254 (QAKKLMKRTA…ITAFELIQQY (132 aa)) is I-domain. Glutamate 159 is a binding site for DNA. Residues glycine 232 and aspartate 234 each coordinate DNA. Residue aspartate 234 coordinates Mg(2+). Positions 336–344 (AQGRLDSFF) are interaction with PCNA. The disordered stretch occupies residues 352–376 (SKSEAASGVKRKKPTTKAKESRKKK). Positions 360–376 (VKRKKPTTKAKESRKKK) are enriched in basic residues.

The protein belongs to the XPG/RAD2 endonuclease family. FEN1 subfamily. In terms of assembly, interacts with PCNA. Three molecules of FEN1 bind to one PCNA trimer with each molecule binding to one PCNA monomer. PCNA stimulates the nuclease activity without altering cleavage specificity. Mg(2+) is required as a cofactor. Post-translationally, phosphorylated. Phosphorylation upon DNA damage induces relocalization to the nuclear plasma.

The protein localises to the nucleus. It is found in the nucleolus. The protein resides in the nucleoplasm. It localises to the mitochondrion. Structure-specific nuclease with 5'-flap endonuclease and 5'-3' exonuclease activities involved in DNA replication and repair. During DNA replication, cleaves the 5'-overhanging flap structure that is generated by displacement synthesis when DNA polymerase encounters the 5'-end of a downstream Okazaki fragment. It enters the flap from the 5'-end and then tracks to cleave the flap base, leaving a nick for ligation. Also involved in the long patch base excision repair (LP-BER) pathway, by cleaving within the apurinic/apyrimidinic (AP) site-terminated flap. Acts as a genome stabilization factor that prevents flaps from equilibrating into structures that lead to duplications and deletions. Also possesses 5'-3' exonuclease activity on nicked or gapped double-stranded DNA, and exhibits RNase H activity. Also involved in replication and repair of rDNA and in repairing mitochondrial DNA. This is Flap endonuclease 1 from Entamoeba dispar (strain ATCC PRA-260 / SAW760).